The primary structure comprises 560 residues: Long-chain-fatty-acid--CoA ligase (560 aa).

It belongs to the ATP-dependent AMP-binding enzyme family.

The enzyme catalyses a long-chain fatty acid + ATP + CoA = a long-chain fatty acyl-CoA + AMP + diphosphate. This Bacillus subtilis (strain 168) protein is Long-chain-fatty-acid--CoA ligase (lcfA).